The primary structure comprises 196 residues: Pyridoxal 5'-phosphate synthase subunit PdxT (196 aa).

Gly-47–Ser-49 contacts L-glutamine. Cys-79 (nucleophile) is an active-site residue. Residues Arg-106 and Ile-134–Arg-135 contribute to the L-glutamine site. Catalysis depends on charge relay system residues His-170 and Glu-172.

This sequence belongs to the glutaminase PdxT/SNO family. In the presence of PdxS, forms a dodecamer of heterodimers. Only shows activity in the heterodimer.

It carries out the reaction aldehydo-D-ribose 5-phosphate + D-glyceraldehyde 3-phosphate + L-glutamine = pyridoxal 5'-phosphate + L-glutamate + phosphate + 3 H2O + H(+). It catalyses the reaction L-glutamine + H2O = L-glutamate + NH4(+). It participates in cofactor biosynthesis; pyridoxal 5'-phosphate biosynthesis. Its function is as follows. Catalyzes the hydrolysis of glutamine to glutamate and ammonia as part of the biosynthesis of pyridoxal 5'-phosphate. The resulting ammonia molecule is channeled to the active site of PdxS. The polypeptide is Pyridoxal 5'-phosphate synthase subunit PdxT (Bacillus subtilis (strain 168)).